The primary structure comprises 465 residues: Adenosylhomocysteinase (465 aa).

Residues Thr-56, Asp-131, and Glu-191 each coordinate substrate. NAD(+) is bound at residue 192-194; sequence TTT. Substrate-binding residues include Lys-221 and Asp-225. NAD(+) contacts are provided by residues Asn-226, 255-260, Glu-278, Asn-313, 334-336, and Asn-379; these read GYGNVG and IGH.

The protein belongs to the adenosylhomocysteinase family. The cofactor is NAD(+).

The protein localises to the cytoplasm. The enzyme catalyses S-adenosyl-L-homocysteine + H2O = L-homocysteine + adenosine. Its pathway is amino-acid biosynthesis; L-homocysteine biosynthesis; L-homocysteine from S-adenosyl-L-homocysteine: step 1/1. In terms of biological role, may play a key role in the regulation of the intracellular concentration of adenosylhomocysteine. The sequence is that of Adenosylhomocysteinase from Bartonella quintana (strain Toulouse) (Rochalimaea quintana).